The primary structure comprises 238 residues: Zinc import ATP-binding protein ZnuC (238 aa).

The ABC transporter domain occupies 5–220 (ITLKNIHVSF…LEFISIFGLK (216 aa)). 37–44 (GPNGAGKS) provides a ligand contact to ATP.

Belongs to the ABC transporter superfamily. Zinc importer (TC 3.A.1.15.5) family. In terms of assembly, the complex is composed of two ATP-binding proteins (ZnuC), two transmembrane proteins (ZnuB) and a solute-binding protein (ZnuA).

It is found in the cell inner membrane. It carries out the reaction Zn(2+)(out) + ATP(in) + H2O(in) = Zn(2+)(in) + ADP(in) + phosphate(in) + H(+)(in). In terms of biological role, part of the ABC transporter complex ZnuABC involved in zinc import. Responsible for energy coupling to the transport system. This chain is Zinc import ATP-binding protein ZnuC, found in Buchnera aphidicola subsp. Schizaphis graminum (strain Sg).